The following is a 297-amino-acid chain: Palmitoyl-protein thioesterase ABHD10, mitochondrial (297 aa).

The N-terminal 43 residues, 1–43 (MAAWVPCRKWGWAAVSFGRHRGLIASLARKPPWAWWLSACRQK), are a transit peptide targeting the mitochondrion. The 113-residue stretch at 69-181 (IIFIPGYLSN…GVVTQFHSLP (113 aa)) folds into the AB hydrolase-1 domain. Active-site charge relay system residues include Ser143, Asp240, and His270.

The protein belongs to the AB hydrolase superfamily. As to expression, expressed in epididymal sperm but not in testicular sperm (at protein level).

The protein resides in the mitochondrion. It catalyses the reaction S-hexadecanoyl-L-cysteinyl-[protein] + H2O = L-cysteinyl-[protein] + hexadecanoate + H(+). The enzyme catalyses mycophenolic acid O-acyl-beta-D-glucuronide + H2O = mycophenolate + D-glucuronate + H(+). Inhibited by palmostatin-B. In terms of biological role, acts as an acyl-protein thioesterase that hydrolyzes fatty acids from acylated residues in proteins. Regulates the mitochondrial S-depalmitoylation of the nucleophilic active site residue of peroxiredoxin-5/PRDX5, a key antioxidant protein, therefore modulating mitochondrial antioxidant ability. Also catalyzes the deglucuronidation of mycophenolic acid acyl-glucuronide, an active metabolite of the immunosuppressant drug mycophenolate. This Rattus norvegicus (Rat) protein is Palmitoyl-protein thioesterase ABHD10, mitochondrial.